The primary structure comprises 442 residues: Xaa-Pro dipeptidase (442 aa).

Mn(2+) contacts are provided by Asp245, Asp256, His338, Glu383, and Glu422.

Belongs to the peptidase M24B family. Bacterial-type prolidase subfamily. The cofactor is Mn(2+).

The enzyme catalyses Xaa-L-Pro dipeptide + H2O = an L-alpha-amino acid + L-proline. Splits dipeptides with a prolyl residue in the C-terminal position. The polypeptide is Xaa-Pro dipeptidase (Sodalis glossinidius (strain morsitans)).